The primary structure comprises 231 residues: NADH-ubiquinone oxidoreductase chain 4 (231 aa).

Transmembrane regions (helical) follow at residues 1-21, 34-54, 61-80, 84-106, 128-148, 156-176, and 211-231; these read PIAG…YGII, VFLP…LTCL, SLIA…AIII, WGLS…LFCL, ILPM…ATPP, LLII…LGLS, and LLMI…ELVI.

It belongs to the complex I subunit 4 family.

It is found in the mitochondrion membrane. The catalysed reaction is a ubiquinone + NADH + 5 H(+)(in) = a ubiquinol + NAD(+) + 4 H(+)(out). Functionally, core subunit of the mitochondrial membrane respiratory chain NADH dehydrogenase (Complex I) that is believed to belong to the minimal assembly required for catalysis. Complex I functions in the transfer of electrons from NADH to the respiratory chain. The immediate electron acceptor for the enzyme is believed to be ubiquinone. In Tropidolaemus wagleri (Wagler's pit viper), this protein is NADH-ubiquinone oxidoreductase chain 4 (MT-ND4).